Consider the following 349-residue polypeptide: Aspartate carbamoyltransferase catalytic subunit (349 aa).

Carbamoyl phosphate contacts are provided by Arg-59 and Thr-60. Lys-87 lines the L-aspartate pocket. The carbamoyl phosphate site is built by Arg-109, His-142, and Gln-145. L-aspartate-binding residues include Arg-182 and Arg-253. The carbamoyl phosphate site is built by Gly-294 and Pro-295.

This sequence belongs to the aspartate/ornithine carbamoyltransferase superfamily. ATCase family. As to quaternary structure, heterododecamer (2C3:3R2) of six catalytic PyrB chains organized as two trimers (C3), and six regulatory PyrI chains organized as three dimers (R2).

It carries out the reaction carbamoyl phosphate + L-aspartate = N-carbamoyl-L-aspartate + phosphate + H(+). It participates in pyrimidine metabolism; UMP biosynthesis via de novo pathway; (S)-dihydroorotate from bicarbonate: step 2/3. Functionally, catalyzes the condensation of carbamoyl phosphate and aspartate to form carbamoyl aspartate and inorganic phosphate, the committed step in the de novo pyrimidine nucleotide biosynthesis pathway. The sequence is that of Aspartate carbamoyltransferase catalytic subunit from Synechococcus sp. (strain CC9311).